Reading from the N-terminus, the 455-residue chain is Phosphoglucosamine mutase (455 aa).

S104 acts as the Phosphoserine intermediate in catalysis. Positions 104, 253, 255, and 257 each coordinate Mg(2+). Phosphoserine is present on S104.

It belongs to the phosphohexose mutase family. Mg(2+) serves as cofactor. Activated by phosphorylation.

It carries out the reaction alpha-D-glucosamine 1-phosphate = D-glucosamine 6-phosphate. Functionally, catalyzes the conversion of glucosamine-6-phosphate to glucosamine-1-phosphate. This is Phosphoglucosamine mutase from Psychrobacter arcticus (strain DSM 17307 / VKM B-2377 / 273-4).